Consider the following 289-residue polypeptide: Fatty acid elongase 3-like (289 aa).

The next 7 helical transmembrane spans lie at 35–55, 75–95, 129–149, 157–176, 181–203, 205–225, and 248–268; these read SFLF…HILL, SLLM…SAAA, VFFW…RTIF, LAVS…FLWL, SYQI…YRFW, GFGL…LVLV, and IGAW…FLNF.

It belongs to the ELO family.

It localises to the membrane. Probable very long-chain fatty acid (VLCFA) elongase that controls VLCFA composition and functions to inhibit abscisic acid (ABA)-mediated stress responses, including regulation of stomatal aperture, maintenance of primary root growth and inhibition of germination. VLCFA pathway and products may function as signaling components acting upstream of sphingosine-1-phosphate, ceramide and the heterotrimeric G-protein complex, in lipid-mediated regulation of abiotic stress signaling. This is Fatty acid elongase 3-like (HOS3) from Arabidopsis thaliana (Mouse-ear cress).